A 102-amino-acid chain; its full sequence is uncharacterized protein (102 aa).

The helical transmembrane segment at Ile-29–Tyr-52 threads the bilayer.

It is found in the membrane. This is an uncharacterized protein from Saccharomyces cerevisiae (strain ATCC 204508 / S288c) (Baker's yeast).